A 500-amino-acid chain; its full sequence is MTIFDNYEVWFVIGSQHLYGAETLRQVTQHAEHVVNALNTEAKLPCKLVLKPLGTSPDEITAICRDANYDDRCAGLVVWLHTFSPAKMWINGLSILNKPLLQFHTQFNAALPWDSIDMDFMNLNQTAHGGREFGFIGARMRQQHAVVTGHWQDKEAHTRIGAWMRQAVSKQDTRQLKVCRFGDNMREVAVTDGDKVAAQIKFGFSVNTWAVGDLVQVVNSIGDGDINALIDEYESSYTLTPATQIHGDKRQNVREAARIELGMKRFLEQGGFHAFTTTFEDLHGLKQLPGLAVQRLMQQGYGFAGEGDWKTAALLRIMKVMSTGLQGGTSFMEDYTYHFEKGNDLVLGSHMLEVCPSIAVEEKLILDVQHLGIGGKEDPARLIFNTQTGPAIVASLIDLGDRYRLLVNCIDTVKTPHSLPKLPVANALWKAQPDLPTASEAWILAGGAHHTVFSHALDLNDMRQFAEIHDIEIAVIDNDTRLPAFKDALRWNEVYYGLKR.

Residues E306, E333, H350, and H450 each coordinate Mn(2+).

The protein belongs to the arabinose isomerase family. As to quaternary structure, homohexamer. It depends on Mn(2+) as a cofactor.

The catalysed reaction is beta-L-arabinopyranose = L-ribulose. The protein operates within carbohydrate degradation; L-arabinose degradation via L-ribulose; D-xylulose 5-phosphate from L-arabinose (bacterial route): step 1/3. Its function is as follows. Catalyzes the conversion of L-arabinose to L-ribulose. This chain is L-arabinose isomerase, found in Salmonella choleraesuis (strain SC-B67).